The sequence spans 250 residues: Bacteriorhodopsin-I (250 aa).

Transmembrane regions (helical) follow at residues Glu-7–Ala-27, Ile-42–Phe-62, Tyr-81–Ala-101, Val-114–Ala-134, Leu-139–Ser-159, Val-185–Ile-205, and Ile-207–Leu-227. The residue at position 220 (Lys-220) is an N6-(retinylidene)lysine.

It belongs to the archaeal/bacterial/fungal opsin family. The covalent binding of retinal to the apoprotein, bacterioopsin, generates bacteriorhodopsin.

The protein resides in the membrane. Its function is as follows. Light-driven proton pump. In Haloarcula marismortui (strain ATCC 43049 / DSM 3752 / JCM 8966 / VKM B-1809) (Halobacterium marismortui), this protein is Bacteriorhodopsin-I (bop).